The following is a 348-amino-acid chain: Holliday junction branch migration complex subunit RuvB (348 aa).

Residues 1-20 (MKPPARMVSPERRSDDVGDT) form a disordered region. A large ATPase domain (RuvB-L) region spans residues 1 to 183 (MKPPARMVSP…FGIPIRLNFY (183 aa)). ATP contacts are provided by residues leucine 22, arginine 23, glycine 64, lysine 67, threonine 68, threonine 69, 130–132 (EDF), arginine 173, tyrosine 183, and arginine 220. Position 68 (threonine 68) interacts with Mg(2+). Positions 184 to 254 (TVEELEGIVT…IADHALSALE (71 aa)) are small ATPAse domain (RuvB-S). Residues 257 to 348 (AAGLDAMDRR…QIGLFGNDDD (92 aa)) are head domain (RuvB-H). 3 residues coordinate DNA: arginine 293, arginine 312, and arginine 317.

This sequence belongs to the RuvB family. Homohexamer. Forms an RuvA(8)-RuvB(12)-Holliday junction (HJ) complex. HJ DNA is sandwiched between 2 RuvA tetramers; dsDNA enters through RuvA and exits via RuvB. An RuvB hexamer assembles on each DNA strand where it exits the tetramer. Each RuvB hexamer is contacted by two RuvA subunits (via domain III) on 2 adjacent RuvB subunits; this complex drives branch migration. In the full resolvosome a probable DNA-RuvA(4)-RuvB(12)-RuvC(2) complex forms which resolves the HJ.

The protein localises to the cytoplasm. The enzyme catalyses ATP + H2O = ADP + phosphate + H(+). The RuvA-RuvB-RuvC complex processes Holliday junction (HJ) DNA during genetic recombination and DNA repair, while the RuvA-RuvB complex plays an important role in the rescue of blocked DNA replication forks via replication fork reversal (RFR). RuvA specifically binds to HJ cruciform DNA, conferring on it an open structure. The RuvB hexamer acts as an ATP-dependent pump, pulling dsDNA into and through the RuvAB complex. RuvB forms 2 homohexamers on either side of HJ DNA bound by 1 or 2 RuvA tetramers; 4 subunits per hexamer contact DNA at a time. Coordinated motions by a converter formed by DNA-disengaged RuvB subunits stimulates ATP hydrolysis and nucleotide exchange. Immobilization of the converter enables RuvB to convert the ATP-contained energy into a lever motion, pulling 2 nucleotides of DNA out of the RuvA tetramer per ATP hydrolyzed, thus driving DNA branch migration. The RuvB motors rotate together with the DNA substrate, which together with the progressing nucleotide cycle form the mechanistic basis for DNA recombination by continuous HJ branch migration. Branch migration allows RuvC to scan DNA until it finds its consensus sequence, where it cleaves and resolves cruciform DNA. This is Holliday junction branch migration complex subunit RuvB from Bradyrhizobium sp. (strain ORS 278).